The primary structure comprises 372 residues: Peptide chain release factor 2 (372 aa).

Glutamine 253 carries the post-translational modification N5-methylglutamine.

The protein belongs to the prokaryotic/mitochondrial release factor family. Post-translationally, methylated by PrmC. Methylation increases the termination efficiency of RF2.

The protein localises to the cytoplasm. Peptide chain release factor 2 directs the termination of translation in response to the peptide chain termination codons UGA and UAA. The sequence is that of Peptide chain release factor 2 from Nocardia farcinica (strain IFM 10152).